Here is a 515-residue protein sequence, read N- to C-terminus: MGEEQSTVSGSGGARASGGGSAGQPESPRPRGDRVRTAGPRAAASSSRPNGGGGGRDPGCVDASVQEPASNRAPAGQPARLPLSGPLDPQSLELQLEREAEGAGPREAPPGQQPPDGLLLDVLAQRHPPPAKPQVLCSVYCVESDLPEAPSAESPSPSESPPQAPLGPIPASPPPSFPSSPLSLPADPLSPDGGSIELEFYLAPEPFSVPGLLGAPPYSGLGGVGDPYAPLMVLMCRVCLEDKPIKPLPCCKKAVCEECLKIYLSSQVQLGQVEIKCPVTECFEFLEETTVVYNLTHEDSIKYKYFLELGRIDSSTKPCPQCKHFTTFKKKGHIPTPSRSESRYKIQCPTCQLIWCFKCHSPWHEGVNCKEYKKGDKLLRHWASEIEHGQRNAQKCPKCKIHIQRTEGCDHMTCSQCNTNFCYRCGERYRQLRFFGDHTSNLSIFGCKYRYLPERPHLRRLVRGSVCAGKLFIAPLILVLGLALGAIAVVIGLFVFPIYCLCKKQRKRSRTGMHW.

Disordered regions lie at residues 1–125 and 147–189; these read MGEE…VLAQ and PEAP…ADPL. Positions 10–22 are enriched in gly residues; it reads GSGGARASGGGSA. Low complexity-rich tracts occupy residues 39–49 and 147–157; these read GPRAAASSSRP and PEAPSAESPSP. The span at 158–178 shows a compositional bias: pro residues; it reads SESPPQAPLGPIPASPPPSFP. Residues 179–189 show a composition bias toward low complexity; the sequence is SSPLSLPADPL. Residues 232 to 451 are TRIAD supradomain; the sequence is MVLMCRVCLE…LSIFGCKYRY (220 aa). Residues Cys236, Cys239, Cys256, Cys259, Cys356, Cys359, His364, Cys369, Cys396, and Cys399 each contribute to the Zn(2+) site. An RING-type 1 zinc finger spans residues 236-282; it reads CRVCLEDKPIKPLPCCKKAVCEECLKIYLSSQVQLGQVEIKCPVTEC. The segment at 301-369 adopts an IBR-type zinc-finger fold; that stretch reads IKYKYFLELG…HSPWHEGVNC (69 aa). The RING-type 2; atypical zinc-finger motif lies at 396 to 425; sequence CPKCKIHIQRTEGCDHMTCSQCNTNFCYRC. Cys409 is a catalytic residue. Zn(2+) contacts are provided by Cys414, Cys417, Cys422, Cys425, His438, and Cys447. Residues 476–496 traverse the membrane as a helical segment; that stretch reads LILVLGLALGAIAVVIGLFVF.

This sequence belongs to the RBR family. RNF217 subfamily. As to quaternary structure, interacts with HAX1.

It is found in the membrane. It localises to the cytoplasm. It carries out the reaction [E2 ubiquitin-conjugating enzyme]-S-ubiquitinyl-L-cysteine + [acceptor protein]-L-lysine = [E2 ubiquitin-conjugating enzyme]-L-cysteine + [acceptor protein]-N(6)-ubiquitinyl-L-lysine.. The protein operates within protein modification; protein ubiquitination. Functionally, E3 ubiquitin-protein ligase which accepts ubiquitin from E2 ubiquitin-conjugating enzymes in the form of a thioester and then directly transfers the ubiquitin to targeted substrates. Mediates the degradation of the iron exporter ferroportin/SLC40A1 and thus regulates iron homeostasis. The sequence is that of E3 ubiquitin-protein ligase RNF217 (Rnf217) from Mus musculus (Mouse).